A 223-amino-acid chain; its full sequence is ATP-dependent dethiobiotin synthetase BioD (223 aa).

ATP is bound at residue 12 to 17 (EIGKTH). Thr16 contributes to the Mg(2+) binding site. Lys37 is a catalytic residue. Ser41 contributes to the substrate binding site. ATP-binding positions include Asp52 and 118-121 (EGVG). Positions 52 and 118 each coordinate Mg(2+).

Belongs to the dethiobiotin synthetase family. As to quaternary structure, homodimer. Requires Mg(2+) as cofactor.

The protein localises to the cytoplasm. The catalysed reaction is (7R,8S)-7,8-diammoniononanoate + CO2 + ATP = (4R,5S)-dethiobiotin + ADP + phosphate + 3 H(+). Its pathway is cofactor biosynthesis; biotin biosynthesis; biotin from 7,8-diaminononanoate: step 1/2. Catalyzes a mechanistically unusual reaction, the ATP-dependent insertion of CO2 between the N7 and N8 nitrogen atoms of 7,8-diaminopelargonic acid (DAPA, also called 7,8-diammoniononanoate) to form a ureido ring. The chain is ATP-dependent dethiobiotin synthetase BioD from Acidiphilium cryptum (strain JF-5).